The chain runs to 358 residues: 3-dehydroquinate synthase (358 aa).

Residues 75–80, 109–113, 133–134, lysine 146, and lysine 155 contribute to the NAD(+) site; these read SGEGSK, GVLGD, and TT. Positions 188, 245, and 262 each coordinate Zn(2+).

The protein belongs to the sugar phosphate cyclases superfamily. Dehydroquinate synthase family. Co(2+) is required as a cofactor. Requires Zn(2+) as cofactor. NAD(+) serves as cofactor.

Its subcellular location is the cytoplasm. The catalysed reaction is 7-phospho-2-dehydro-3-deoxy-D-arabino-heptonate = 3-dehydroquinate + phosphate. It participates in metabolic intermediate biosynthesis; chorismate biosynthesis; chorismate from D-erythrose 4-phosphate and phosphoenolpyruvate: step 2/7. Catalyzes the conversion of 3-deoxy-D-arabino-heptulosonate 7-phosphate (DAHP) to dehydroquinate (DHQ). This Methylacidiphilum infernorum (isolate V4) (Methylokorus infernorum (strain V4)) protein is 3-dehydroquinate synthase.